A 239-amino-acid polypeptide reads, in one-letter code: Exosome complex component Rrp4 (239 aa).

One can recognise an S1 motif domain in the interval Gly-67–Leu-139. The KH domain maps to Gln-151–Glu-217.

Belongs to the RRP4 family. In terms of assembly, component of the archaeal exosome complex. Forms a trimer of Rrp4 and/or Csl4 subunits. The trimer associates with a hexameric ring-like arrangement composed of 3 Rrp41-Rrp42 heterodimers.

It is found in the cytoplasm. Non-catalytic component of the exosome, which is a complex involved in RNA degradation. Increases the RNA binding and the efficiency of RNA degradation. Confers strong poly(A) specificity to the exosome. This Methanopyrus kandleri (strain AV19 / DSM 6324 / JCM 9639 / NBRC 100938) protein is Exosome complex component Rrp4.